A 248-amino-acid chain; its full sequence is Probable transcriptional regulatory protein RPA1097 (248 aa).

A disordered region spans residues 1–21 (MAGHSQFKNIMHRKGRQDAQR).

This sequence belongs to the TACO1 family.

The protein localises to the cytoplasm. The sequence is that of Probable transcriptional regulatory protein RPA1097 from Rhodopseudomonas palustris (strain ATCC BAA-98 / CGA009).